The sequence spans 876 residues: GATOR2 complex protein MIOS (876 aa).

WD repeat units follow at residues 59-101, 112-156, 182-222, 224-262, 266-307, and 400-440; these read SDTP…NSKS, KHAR…SPEA, GQND…QKTF, NTKAIQGVTVDPHFQDRVASYFEGQVAIWDLRKFEKPVF, EQPK…MPFG, and RAQS…KQYT. Residues 738–784 form a C4-type zinc finger; that stretch reads VSCNFCGKSISYSCSAMPHQGRGFSQYGVSGSPTKSKVTSCPGCRKP. Residues cysteine 740, cysteine 743, cysteine 778, cysteine 781, cysteine 791, cysteine 830, cysteine 833, histidine 835, histidine 838, histidine 841, cysteine 852, cysteine 857, and cysteine 861 each contribute to the Zn(2+) site. The RING-type; atypical zinc-finger motif lies at 785–866; it reads LPRCALCLMN…CTCKCMQLDT (82 aa).

The protein belongs to the WD repeat mio family. In terms of assembly, component of the GATOR2 subcomplex, composed of MIOS, SEC13, SEH1L, WDR24 and WDR59. The GATOR2 complex interacts with CASTOR1 and CASTOR2; the interaction is negatively regulated by arginine. The GATOR2 complex interacts with SESN1, SESN2 and SESN3; the interaction is negatively regulated by amino acids. Interacts with SAR1; the interaction is direct, disrupted by leucine and mediates the interaction of SAR1 with the GATOR2 complex to negatively regulate the TORC1 signaling upon leucine deprivation.

The protein resides in the lysosome membrane. The GATOR2 complex is negatively regulated by the upstream amino acid sensors CASTOR1 and SESN2, which sequester the GATOR2 complex in absence of amino acids. In the presence of abundant amino acids, GATOR2 is released from CASTOR1 and SESN2 and activated. Its function is as follows. As a component of the GATOR2 complex, functions as an activator of the amino acid-sensing branch of the mTORC1 signaling pathway. The GATOR2 complex indirectly activates mTORC1 through the inhibition of the GATOR1 subcomplex. GATOR2 probably acts as an E3 ubiquitin-protein ligase toward GATOR1. In the presence of abundant amino acids, the GATOR2 complex mediates ubiquitination of the NPRL2 core component of the GATOR1 complex, leading to GATOR1 inactivation. In the absence of amino acids, GATOR2 is inhibited, activating the GATOR1 complex. Within the GATOR2 complex, MIOS is required to prevent autoubiquitination of WDR24, the catalytic subunit of the complex. This chain is GATOR2 complex protein MIOS, found in Danio rerio (Zebrafish).